The following is a 172-amino-acid chain: 3-hydroxydecanoyl-[acyl-carrier-protein] dehydratase (172 aa).

The active site involves H71.

It belongs to the thioester dehydratase family. FabA subfamily. Homodimer.

It is found in the cytoplasm. It carries out the reaction a (3R)-hydroxyacyl-[ACP] = a (2E)-enoyl-[ACP] + H2O. It catalyses the reaction (3R)-hydroxydecanoyl-[ACP] = (2E)-decenoyl-[ACP] + H2O. The enzyme catalyses (2E)-decenoyl-[ACP] = (3Z)-decenoyl-[ACP]. The protein operates within lipid metabolism; fatty acid biosynthesis. Functionally, necessary for the introduction of cis unsaturation into fatty acids. Catalyzes the dehydration of (3R)-3-hydroxydecanoyl-ACP to E-(2)-decenoyl-ACP and then its isomerization to Z-(3)-decenoyl-ACP. Can catalyze the dehydratase reaction for beta-hydroxyacyl-ACPs with saturated chain lengths up to 16:0, being most active on intermediate chain length. The polypeptide is 3-hydroxydecanoyl-[acyl-carrier-protein] dehydratase (Sodalis glossinidius (strain morsitans)).